Here is a 292-residue protein sequence, read N- to C-terminus: ATP synthase gamma chain (292 aa).

This sequence belongs to the ATPase gamma chain family. F-type ATPases have 2 components, CF(1) - the catalytic core - and CF(0) - the membrane proton channel. CF(1) has five subunits: alpha(3), beta(3), gamma(1), delta(1), epsilon(1). CF(0) has three main subunits: a, b and c.

The protein localises to the cell inner membrane. Produces ATP from ADP in the presence of a proton gradient across the membrane. The gamma chain is believed to be important in regulating ATPase activity and the flow of protons through the CF(0) complex. In Syntrophobacter fumaroxidans (strain DSM 10017 / MPOB), this protein is ATP synthase gamma chain.